The primary structure comprises 77 residues: Acyl carrier protein (77 aa).

In terms of domain architecture, Carrier spans 2–77 (SDVADRVKKI…DAVKFISEAS (76 aa)). Residue S37 is modified to O-(pantetheine 4'-phosphoryl)serine.

Belongs to the acyl carrier protein (ACP) family. Post-translationally, 4'-phosphopantetheine is transferred from CoA to a specific serine of apo-ACP by AcpS. This modification is essential for activity because fatty acids are bound in thioester linkage to the sulfhydryl of the prosthetic group.

It localises to the cytoplasm. It participates in lipid metabolism; fatty acid biosynthesis. Carrier of the growing fatty acid chain in fatty acid biosynthesis. The sequence is that of Acyl carrier protein from Ruegeria pomeroyi (strain ATCC 700808 / DSM 15171 / DSS-3) (Silicibacter pomeroyi).